Reading from the N-terminus, the 144-residue chain is Cytochrome c oxidase subunit 4 isoform 1, mitochondrial (144 aa).

The Mitochondrial matrix segment spans residues 1–73 (SVVKSEDFTL…SFAEMNRRSN (73 aa)). N6-acetyllysine; alternate is present on lysine 4. Lysine 4 carries the post-translational modification N6-succinyllysine; alternate. The residue at position 28 (lysine 28) is an N6-acetyllysine. A phosphoserine mark is found at serine 31 and serine 33. Lysine 35 carries the post-translational modification N6-acetyllysine; alternate. Residue lysine 35 is modified to N6-succinyllysine; alternate. Lysine 42 carries the post-translational modification N6-acetyllysine. The chain crosses the membrane as a helical span at residues 74–99 (EWKTVVGTAMFFFGITALIVMWEKRY). Residues 100 to 144 (VYGPLPQTFDKEWVAMQTKRMLDMKVNPIQGLASKWDYEKNEWKK) are Mitochondrial intermembrane-facing.

The protein belongs to the cytochrome c oxidase IV family. In terms of assembly, component of the cytochrome c oxidase (complex IV, CIV), a multisubunit enzyme composed of 14 subunits. The complex is composed of a catalytic core of 3 subunits MT-CO1, MT-CO2 and MT-CO3, encoded in the mitochondrial DNA, and 11 supernumerary subunits COX4I, COX5A, COX5B, COX6A, COX6B, COX6C, COX7A, COX7B, COX7C, COX8 and NDUFA4, which are encoded in the nuclear genome. The complex exists as a monomer or a dimer and forms supercomplexes (SCs) in the inner mitochondrial membrane with NADH-ubiquinone oxidoreductase (complex I, CI) and ubiquinol-cytochrome c oxidoreductase (cytochrome b-c1 complex, complex III, CIII), resulting in different assemblies (supercomplex SCI(1)III(2)IV(1) and megacomplex MCI(2)III(2)IV(2)). Interacts with PHB2; the interaction decreases in absence of SPHK2. Interacts with AFG1L. Interacts with ABCB7; this interaction allows the regulation of cellular iron homeostasis and cellular reactive oxygen species (ROS) levels in cardiomyocytes. Interacts with FLVCR2; this interaction occurs in the absence of heme and is disrupted upon heme binding. Interacts with IRGC.

The protein resides in the mitochondrion inner membrane. It participates in energy metabolism; oxidative phosphorylation. Component of the cytochrome c oxidase, the last enzyme in the mitochondrial electron transport chain which drives oxidative phosphorylation. The respiratory chain contains 3 multisubunit complexes succinate dehydrogenase (complex II, CII), ubiquinol-cytochrome c oxidoreductase (cytochrome b-c1 complex, complex III, CIII) and cytochrome c oxidase (complex IV, CIV), that cooperate to transfer electrons derived from NADH and succinate to molecular oxygen, creating an electrochemical gradient over the inner membrane that drives transmembrane transport and the ATP synthase. Cytochrome c oxidase is the component of the respiratory chain that catalyzes the reduction of oxygen to water. Electrons originating from reduced cytochrome c in the intermembrane space (IMS) are transferred via the dinuclear copper A center (CU(A)) of subunit 2 and heme A of subunit 1 to the active site in subunit 1, a binuclear center (BNC) formed by heme A3 and copper B (CU(B)). The BNC reduces molecular oxygen to 2 water molecules using 4 electrons from cytochrome c in the IMS and 4 protons from the mitochondrial matrix. The chain is Cytochrome c oxidase subunit 4 isoform 1, mitochondrial (COX4I1) from Theropithecus gelada (Gelada baboon).